Here is a 195-residue protein sequence, read N- to C-terminus: Putative CheY-P phosphatase CheC1 (195 aa).

Belongs to the CheC family.

Catalyzes the dephosphorylation of CheY-P. The protein is Putative CheY-P phosphatase CheC1 (cheC1) of Halobacterium salinarum (strain ATCC 29341 / DSM 671 / R1).